A 520-amino-acid chain; its full sequence is Pleckstrin homology domain-containing family A member 8 (520 aa).

A PH domain is found at 1–93 (MEGVLYKWTN…WLVALGSAKA (93 aa)). A Phosphothreonine modification is found at Thr139. Ser145 is subject to Phosphoserine. Thr153 carries the phosphothreonine modification. Polar residues predominate over residues 255 to 268 (ISSEENTDGNTTVQ). The tract at residues 255–303 (ISSEENTDGNTTVQGERMKEDGEENLESHDRDLAQPGSDSVCSPESPWE) is disordered. A compositionally biased stretch (basic and acidic residues) spans 270-287 (ERMKEDGEENLESHDRDL). A glycolipid transfer protein homology domain region spans residues 311–520 (TFFSTMNTSF…IHGLESDEVV (210 aa)).

Homodimer. Interacts with ARF1; the interaction together with phosphatidylinositol 4-phosphate binding is required for FAPP2 GlcCer transfer ability.

It is found in the golgi apparatus. The protein localises to the trans-Golgi network membrane. The protein resides in the membrane. Its function is as follows. Cargo transport protein that is required for apical transport from the trans-Golgi network (TGN). Transports AQP2 from the trans-Golgi network (TGN) to sites of AQP2 phosphorylation. Mediates the non-vesicular transport of glucosylceramide (GlcCer) from the trans-Golgi network (TGN) to the plasma membrane and plays a pivotal role in the synthesis of complex glycosphingolipids. Binding of both phosphatidylinositol 4-phosphate (PIP) and ARF1 are essential for the GlcCer transfer ability. Also required for primary cilium formation, possibly by being involved in the transport of raft lipids to the apical membrane, and for membrane tubulation. This Rattus norvegicus (Rat) protein is Pleckstrin homology domain-containing family A member 8 (Plekha8).